The following is a 545-amino-acid chain: Chaperonin GroEL 2 (545 aa).

Residues 29-32, 86-90, G413, 479-481, and D495 contribute to the ATP site; these read TLGP, DGTTT, and NAA.

Belongs to the chaperonin (HSP60) family. In terms of assembly, forms a cylinder of 14 subunits composed of two heptameric rings stacked back-to-back. Interacts with the co-chaperonin GroES.

The protein resides in the cytoplasm. The catalysed reaction is ATP + H2O + a folded polypeptide = ADP + phosphate + an unfolded polypeptide.. Its function is as follows. Together with its co-chaperonin GroES, plays an essential role in assisting protein folding. The GroEL-GroES system forms a nano-cage that allows encapsulation of the non-native substrate proteins and provides a physical environment optimized to promote and accelerate protein folding. In Prochlorococcus marinus (strain MIT 9215), this protein is Chaperonin GroEL 2.